The primary structure comprises 270 residues: Flagellar hook-basal body complex protein FlhO (270 aa).

Belongs to the flagella basal body rod proteins family.

Not required for motility. The sequence is that of Flagellar hook-basal body complex protein FlhO (flhO) from Bacillus subtilis (strain 168).